Reading from the N-terminus, the 427-residue chain is Glutamate-1-semialdehyde 2,1-aminomutase (427 aa).

At K264 the chain carries N6-(pyridoxal phosphate)lysine.

It belongs to the class-III pyridoxal-phosphate-dependent aminotransferase family. HemL subfamily. As to quaternary structure, homodimer. The cofactor is pyridoxal 5'-phosphate.

Its subcellular location is the cytoplasm. The enzyme catalyses (S)-4-amino-5-oxopentanoate = 5-aminolevulinate. It participates in porphyrin-containing compound metabolism; protoporphyrin-IX biosynthesis; 5-aminolevulinate from L-glutamyl-tRNA(Glu): step 2/2. The sequence is that of Glutamate-1-semialdehyde 2,1-aminomutase from Campylobacter concisus (strain 13826).